The chain runs to 1488 residues: Chromosome partition protein MukB (1488 aa).

Position 34–41 (34–41) interacts with ATP; the sequence is GGNGAGKS. 3 coiled-coil regions span residues 326–418, 444–472, and 509–602; these read LEAD…QYNQ, LDTF…QTAH, and RHLA…QRAP. Residues 666–783 form a flexible hinge region; the sequence is PGGAEDQRLN…SLPIFGRAAR (118 aa). Coiled coils occupy residues 835–923, 977–1116, and 1209–1265; these read EAEI…AKLE, EMLS…AKAG, and VEAI…LQSV. Positions 1049–1074 are disordered; that stretch reads ADSGAEERARQRRDELHAQLSNNRSR. Over residues 1051–1065 the composition is skewed to basic and acidic residues; that stretch reads SGAEERARQRRDELH.

The protein belongs to the SMC family. MukB subfamily. In terms of assembly, homodimerization via its hinge domain. Binds to DNA via its C-terminal region. Interacts, and probably forms a ternary complex, with MukE and MukF via its C-terminal region. The complex formation is stimulated by calcium or magnesium. Interacts with tubulin-related protein FtsZ.

The protein resides in the cytoplasm. The protein localises to the nucleoid. Functionally, plays a central role in chromosome condensation, segregation and cell cycle progression. Functions as a homodimer, which is essential for chromosome partition. Involved in negative DNA supercoiling in vivo, and by this means organize and compact chromosomes. May achieve or facilitate chromosome segregation by condensation DNA from both sides of a centrally located replisome during cell division. In Salmonella paratyphi A (strain ATCC 9150 / SARB42), this protein is Chromosome partition protein MukB.